A 415-amino-acid polypeptide reads, in one-letter code: Squalene synthase 3 (415 aa).

A run of 2 helical transmembrane segments spans residues 281–301 (AIFRFCAIPQIMAIGTLALCY) and 392–412 (LIIILFIILAILYAYLSSNLP).

This sequence belongs to the phytoene/squalene synthase family. Requires Mg(2+) as cofactor. Mn(2+) is required as a cofactor.

Its subcellular location is the endoplasmic reticulum membrane. It catalyses the reaction 2 (2E,6E)-farnesyl diphosphate + NADH + H(+) = squalene + 2 diphosphate + NAD(+). The enzyme catalyses 2 (2E,6E)-farnesyl diphosphate + NADPH + H(+) = squalene + 2 diphosphate + NADP(+). Its pathway is terpene metabolism; lanosterol biosynthesis; lanosterol from farnesyl diphosphate: step 1/3. Its function is as follows. Component of the triterpene saponins (e.g. ginsenosides or panaxosides) and phytosterols biosynthetic pathways. Catalyzes the biosynthesis of squalene. This chain is Squalene synthase 3, found in Panax ginseng (Korean ginseng).